The primary structure comprises 141 residues: MVDMDRISISLPTNLLAEFDEIIEERGYASRSEAIRDSIRDYLIKHKWIHSLEGDRAGTISIIYDHHSTDVMEKLTNIQHDYEKLIVATIHMHLDHDHCMEVVLVKGDASEIKELTDKLTSQKGVKQVKLTVMVPGGNIPQ.

Ni(2+)-binding residues include H80, H91, H93, and C99.

Belongs to the transcriptional regulatory CopG/NikR family. Requires Ni(2+) as cofactor.

Functionally, transcriptional regulator. The chain is Putative nickel-responsive regulator from Methanococcus maripaludis (strain C5 / ATCC BAA-1333).